The primary structure comprises 479 residues: Sulfate adenylyltransferase subunit 1 (479 aa).

One can recognise a tr-type G domain in the interval Lys-25–Arg-239. Positions Gly-34–Ser-41 are G1. Gly-34 to Ser-41 contributes to the GTP binding site. The segment at Gly-92 to Asp-96 is G2. The tract at residues Asp-113 to Gly-116 is G3. GTP contacts are provided by residues Asp-113 to His-117 and Asn-168 to Asp-171. Residues Asn-168–Asp-171 form a G4 region. Residues Ser-206–Leu-208 form a G5 region.

Belongs to the TRAFAC class translation factor GTPase superfamily. Classic translation factor GTPase family. CysN/NodQ subfamily. In terms of assembly, heterodimer composed of CysD, the smaller subunit, and CysN.

It catalyses the reaction sulfate + ATP + H(+) = adenosine 5'-phosphosulfate + diphosphate. It participates in sulfur metabolism; hydrogen sulfide biosynthesis; sulfite from sulfate: step 1/3. With CysD forms the ATP sulfurylase (ATPS) that catalyzes the adenylation of sulfate producing adenosine 5'-phosphosulfate (APS) and diphosphate, the first enzymatic step in sulfur assimilation pathway. APS synthesis involves the formation of a high-energy phosphoric-sulfuric acid anhydride bond driven by GTP hydrolysis by CysN coupled to ATP hydrolysis by CysD. In Salmonella newport (strain SL254), this protein is Sulfate adenylyltransferase subunit 1.